Reading from the N-terminus, the 199-residue chain is Recombination protein RecR (199 aa).

Residues 58 to 73 (CRICYNITDTEVCNIC) form a C4-type zinc finger. The Toprim domain occupies 81-176 (SLICVVSHPM…KVTRIAHGVP (96 aa)).

The protein belongs to the RecR family.

May play a role in DNA repair. It seems to be involved in an RecBC-independent recombinational process of DNA repair. It may act with RecF and RecO. The sequence is that of Recombination protein RecR from Thermoanaerobacter sp. (strain X514).